The following is a 201-amino-acid chain: Thylakoid membrane protein slr1796 (201 aa).

The chain crosses the membrane as a helical span at residues 16 to 36 (FLIVSLAFAMLLLGIWGTLPF).

It localises to the cellular thylakoid membrane. The protein is Thylakoid membrane protein slr1796 of Synechocystis sp. (strain ATCC 27184 / PCC 6803 / Kazusa).